The following is a 1958-amino-acid chain: Sodium channel protein type 10 subunit alpha (1958 aa).

At 1–125 (MEFPFGSVGT…FNLIRRTAIK (125 aa)) the chain is on the cytoplasmic side. The interval 27 to 54 (QIAAHRAAKKGRPKQRGQKDKSEKPRPQ) is disordered. Basic residues predominate over residues 32-42 (RAAKKGRPKQR). Over residues 43–54 (GQKDKSEKPRPQ) the composition is skewed to basic and acidic residues. One copy of the I repeat lies at 116-404 (FNLIRRTAIK…VTMAYEEQSQ (289 aa)). Residues 126–149 (VSVHSWFSIFITVTILVNCVCMTR) traverse the membrane as a helical segment. Over 150–154 (TDLPE) the chain is Extracellular. The helical transmembrane segment at 155–174 (KLEYAFTVVYTFEALIKILA) threads the bilayer. Topologically, residues 175–187 (RGFCLNEFTYLRD) are cytoplasmic. The helical transmembrane segment at 188–206 (PWNWLDFSVITLAYVGAAI) threads the bilayer. At 207-212 (DLRGIS) the chain is on the extracellular side. A helical; Voltage-sensor transmembrane segment spans residues 213–232 (GLRTFRVLRALKTVSVIPGL). The Cytoplasmic portion of the chain corresponds to 233–248 (KVIVGALIHSVRKLAD). Residues 249–272 (VTILTVFCLSVFALVGLQLFKGNL) traverse the membrane as a helical segment. Residues 273 to 340 (KNKCIKNGTD…PDFNYTSFDS (68 aa)) lie on the Extracellular side of the membrane. A disulfide bridge connects residues C276 and C318. N279, N288, N311, and N334 each carry an N-linked (GlcNAc...) asparagine glycan. Residues 341–365 (FAWAFLSLFRLMTQDSWERLYQQTL) constitute an intramembrane region (pore-forming). The Extracellular segment spans residues 366–372 (RASGKMY). The chain crosses the membrane as a helical span at residues 373-398 (MVFFVLVIFLGSFYLVNLILAVVTMA). At 399 to 658 (YEEQSQATIA…KWKKFKMVLF (260 aa)) the chain is on the cytoplasmic side. Phosphoserine is present on residues S440, S443, S466, and S478. Disordered regions lie at residues 444–483 (HNGSPLAPKNANERRPRVKSRMSEGSTDDNRSLQSDPYNQ) and 539–583 (GRGA…APEG). Pro residues predominate over residues 549–560 (PRSPLPQSPNPG). 2 positions are modified to phosphoserine: S611 and S614. The stretch at 646–910 (CCPKWKKFKM…EDDGEVNNLQ (265 aa)) is one II repeat. The helical transmembrane segment at 659 to 683 (ELVTDPFAELTITLCIVVNTVFMAM) threads the bilayer. Over 684 to 694 (EHYPMTDAFDA) the chain is Extracellular. The chain crosses the membrane as a helical span at residues 695 to 718 (MLQAGNIVFTVFFTMEMAFKIIAF). Residues 719–726 (DPYYYFQK) lie on the Cytoplasmic side of the membrane. The helical transmembrane segment at 727–746 (KWNIFDCVIVTVSLLELSTS) threads the bilayer. Residues 747 to 752 (KKGSLS) lie on the Extracellular side of the membrane. The helical; Voltage-sensor transmembrane segment at 753-772 (VLRTFRLLRVFKLAKSWPTL) threads the bilayer. The Cytoplasmic segment spans residues 773–788 (NMLIKIIGNSVGALGN). A helical transmembrane segment spans residues 789 to 809 (LTFILAIIVFIFALVGKQLLS). Topologically, residues 810–833 (ENYGCRRDGISVWNGERLRWHMCD) are extracellular. The pore-forming intramembrane region spans 834 to 854 (FFHSFLVVFRILCGEWIENMW). Residues 855–863 (VCMEVSQDY) lie on the Extracellular side of the membrane. C856 and C865 form a disulfide bridge. A helical membrane pass occupies residues 864 to 889 (ICLTLFLTVMVLGNLVVLNLFIALLL). Residues 890–1148 (NSFSADNLTA…GWQVRKTCYR (259 aa)) lie on the Cytoplasmic side of the membrane. Residues 1006–1094 (DLDELEEDVE…SEGSTVDCPD (89 aa)) form a disordered region. Residues 1017 to 1038 (ASQSSWQEESPKGQQELLQQVQ) show a composition bias toward polar residues. An III repeat occupies 1141–1450 (QVRKTCYRIV…KKYYNAMKKL (310 aa)). Residues 1149 to 1172 (IVEHSWFESFIIFMILLSSGALAF) traverse the membrane as a helical segment. Residues 1173–1185 (EDNYLEEKPRVKS) lie on the Extracellular side of the membrane. Residues 1186-1211 (VLEYTDRVFTFIFVFEMLLKWVAYGF) form a helical membrane-spanning segment. Residues 1212 to 1217 (KKYFTN) lie on the Cytoplasmic side of the membrane. Residues 1218 to 1239 (AWCWLDFLIVNISLTSLIAKIL) form a helical membrane-spanning segment. Residues 1240 to 1243 (EYSD) lie on the Extracellular side of the membrane. The chain crosses the membrane as a helical; Voltage-sensor span at residues 1244 to 1265 (VASIKALRTLRALRPLRALSRF). Residues 1266 to 1284 (EGMRVVVDALVGAIPSIMN) lie on the Cytoplasmic side of the membrane. The helical transmembrane segment at 1285 to 1312 (VLLVCLIFWLIFSIMGVNLFAGKFSRCV) threads the bilayer. The Extracellular portion of the chain corresponds to 1313–1354 (DTRSNPFSVVNSTFVTNKSDCYNQNNTGHFFWVNVKVNFDNV). N1323, N1329, and N1337 each carry an N-linked (GlcNAc...) asparagine glycan. Residues 1355–1376 (AMGYLALLQVATFKGWMDIMYA) constitute an intramembrane region (pore-forming). The Extracellular segment spans residues 1377–1392 (AVDSRDINSQPNWEES). The helical transmembrane segment at 1393–1419 (LYMYLYFVVFIIFGGFFTLNLFVGVII) threads the bilayer. Over 1420-1472 (DNFNQQKKKLGGQDIFMTEEQKKYYNAMKKLGSKKPQKPIPRPLNKYQGFVFD) the chain is Cytoplasmic. Position 1452 is a phosphoserine; by PKC (S1452). Residues 1459 to 1758 (IPRPLNKYQG…WEKFDPEATQ (300 aa)) form an IV repeat. Residues 1473–1496 (IVTRQAFDIIIMALICLNMITMMV) traverse the membrane as a helical segment. Residues 1497–1507 (ETDNQSEEKTK) are Extracellular-facing. N1500 carries N-linked (GlcNAc...) asparagine glycosylation. A helical membrane pass occupies residues 1508–1531 (VLGRINQFFVAVFTGECVMKMFAL). At 1532-1537 (RQYYFT) the chain is on the cytoplasmic side. The chain crosses the membrane as a helical span at residues 1538–1561 (NGWNVFDFIVVILSISSLLFSAIL). Residues 1562-1573 (SSLESYFSPTLL) are Extracellular-facing. A helical; Voltage-sensor membrane pass occupies residues 1574 to 1595 (RVIRLARIGRILRLIRAAKGIR). At 1596–1610 (TLLFALMMSLPALFN) the chain is on the cytoplasmic side. Residues 1611-1633 (IGLLLFLVMFIYSIFGMASFANV) form a helical membrane-spanning segment. Topologically, residues 1634–1647 (IDEAGIDDMFNFKT) are extracellular. The pore-forming intramembrane region spans 1648–1670 (FGNSMLCLFQITTSAGWDGLLSP). Over 1671-1698 (ILNTGPPYCDPNRPNSNGSKGNCGSPAV) the chain is Extracellular. N1687 is a glycosylation site (N-linked (GlcNAc...) asparagine). Residues 1699 to 1723 (GILFFTTYIIISFLIVVNMYIAVIL) traverse the membrane as a helical segment. Residues 1724–1958 (ENFNVATEES…AKEGKSPGPQ (235 aa)) are Cytoplasmic-facing. The 30-residue stretch at 1852–1881 (EDISATIIQKAYRNYMLQRSLMLSNPLHVP) folds into the IQ domain. Positions 1901-1958 (NDNGGLPDKSETASATSFPPSYDSVTRGLSDRANISTSSSMQNEDEVTAKEGKSPGPQ) are disordered. The segment covering 1933 to 1942 (ANISTSSSMQ) has biased composition (polar residues). A compositionally biased stretch (basic and acidic residues) spans 1947–1958 (VTAKEGKSPGPQ).

This sequence belongs to the sodium channel (TC 1.A.1.10) family. Nav1.8/SCN10A subfamily. The channel consists of an ion conducting pore forming alpha-subunit regulated by one or more associated auxiliary subunits SCN1B, SCN2B and SCN3B; electrophysiological properties may vary depending on the type of the associated beta subunits. Found in a number of complexes with PRX, DYNLT1 and PDZD2. Interacts with proteins such as FSTL1, PRX, DYNLT1, PDZD2, S100A10 and many others. Interacts with NEDD4 and NEDD4L. Post-translationally, ubiquitinated by NEDD4L; which promotes its endocytosis. In terms of processing, phosphorylation at Ser-1452 by PKC in a highly conserved cytoplasmic loop slows inactivation of the sodium channel and reduces peak sodium currents. Lacks the cysteine which covalently binds the conotoxin GVIIJ. This cysteine (position 815) is speculated in other sodium channel subunits alpha to be implied in covalent binding with the sodium channel subunit beta-2 or beta-4. In terms of tissue distribution, expressed in dorsal root ganglion and trigeminal ganglion.

It is found in the cell membrane. It catalyses the reaction Na(+)(in) = Na(+)(out). Functionally, tetrodotoxin-resistant channel that mediates the voltage-dependent sodium ion permeability of excitable membranes. Assuming opened or closed conformations in response to the voltage difference across the membrane, the protein forms a sodium-selective channel through which sodium ions may pass in accordance with their electrochemical gradient. Plays a role in neuropathic pain mechanisms. This is Sodium channel protein type 10 subunit alpha from Mus musculus (Mouse).